Reading from the N-terminus, the 265-residue chain is Probable FAD synthase (265 aa).

Belongs to the PAPS reductase family. FAD1 subfamily.

It catalyses the reaction FMN + ATP + H(+) = FAD + diphosphate. Its pathway is cofactor biosynthesis; FAD biosynthesis; FAD from FMN: step 1/1. Functionally, adenylates FMN to FAD. The protein is Probable FAD synthase of Schizosaccharomyces pombe (strain 972 / ATCC 24843) (Fission yeast).